A 90-amino-acid polypeptide reads, in one-letter code: Small ribosomal subunit protein bS18 (90 aa).

This sequence belongs to the bacterial ribosomal protein bS18 family. Part of the 30S ribosomal subunit. Forms a tight heterodimer with protein bS6.

In terms of biological role, binds as a heterodimer with protein bS6 to the central domain of the 16S rRNA, where it helps stabilize the platform of the 30S subunit. This is Small ribosomal subunit protein bS18 from Bordetella avium (strain 197N).